The following is a 325-amino-acid chain: Elongation factor P--(R)-beta-lysine ligase (325 aa).

76-78 (SPE) contributes to the substrate binding site. ATP-binding positions include 100–102 (RNE) and Asn-109. Tyr-118 lines the substrate pocket. Residue 244–245 (EL) participates in ATP binding. Glu-251 contacts substrate. Residue Gly-300 coordinates ATP.

This sequence belongs to the class-II aminoacyl-tRNA synthetase family. EpmA subfamily. Homodimer.

The catalysed reaction is D-beta-lysine + L-lysyl-[protein] + ATP = N(6)-((3R)-3,6-diaminohexanoyl)-L-lysyl-[protein] + AMP + diphosphate + H(+). In terms of biological role, with EpmB is involved in the beta-lysylation step of the post-translational modification of translation elongation factor P (EF-P). Catalyzes the ATP-dependent activation of (R)-beta-lysine produced by EpmB, forming a lysyl-adenylate, from which the beta-lysyl moiety is then transferred to the epsilon-amino group of a conserved specific lysine residue in EF-P. The protein is Elongation factor P--(R)-beta-lysine ligase of Klebsiella pneumoniae (strain 342).